A 409-amino-acid chain; its full sequence is tRNA-specific 2-thiouridylase MnmA (409 aa).

ATP contacts are provided by residues 43 to 50 (AMSGGVDS) and Leu-69. Cys-137 (nucleophile) is an active-site residue. A disulfide bridge connects residues Cys-137 and Cys-235. Gly-161 contacts ATP. Positions 185 to 187 (KDQ) are interaction with tRNA. The active-site Cysteine persulfide intermediate is Cys-235.

It belongs to the MnmA/TRMU family.

The protein localises to the cytoplasm. It carries out the reaction S-sulfanyl-L-cysteinyl-[protein] + uridine(34) in tRNA + AH2 + ATP = 2-thiouridine(34) in tRNA + L-cysteinyl-[protein] + A + AMP + diphosphate + H(+). Its function is as follows. Catalyzes the 2-thiolation of uridine at the wobble position (U34) of tRNA, leading to the formation of s(2)U34. The sequence is that of tRNA-specific 2-thiouridylase MnmA from Caulobacter sp. (strain K31).